A 316-amino-acid chain; its full sequence is Pantothenate kinase (316 aa).

Residue 95–102 participates in ATP binding; the sequence is GSVAVGKS.

This sequence belongs to the prokaryotic pantothenate kinase family.

Its subcellular location is the cytoplasm. It carries out the reaction (R)-pantothenate + ATP = (R)-4'-phosphopantothenate + ADP + H(+). It functions in the pathway cofactor biosynthesis; coenzyme A biosynthesis; CoA from (R)-pantothenate: step 1/5. In Shewanella sediminis (strain HAW-EB3), this protein is Pantothenate kinase.